Reading from the N-terminus, the 168-residue chain is Ribosome maturation factor RimM (168 aa).

Residues 94–167 form the PRC barrel domain; that stretch reads DGQYYYHQII…FVTVELMEGL (74 aa).

This sequence belongs to the RimM family. As to quaternary structure, binds ribosomal protein uS19.

The protein resides in the cytoplasm. Functionally, an accessory protein needed during the final step in the assembly of 30S ribosomal subunit, possibly for assembly of the head region. Essential for efficient processing of 16S rRNA. May be needed both before and after RbfA during the maturation of 16S rRNA. It has affinity for free ribosomal 30S subunits but not for 70S ribosomes. The chain is Ribosome maturation factor RimM from Limosilactobacillus reuteri (strain DSM 20016) (Lactobacillus reuteri).